The following is a 137-amino-acid chain: Large-conductance mechanosensitive channel (137 aa).

A run of 3 helical transmembrane segments spans residues 15–35 (VDLAIGVIIGGAFGGLVNSIV), 38–58 (IIMPIIGLITGGIDFSNMFIQ), and 80–100 (GNFVTLLINFLIIAWVLFLVV).

This sequence belongs to the MscL family. Homopentamer.

It is found in the cell inner membrane. Its function is as follows. Channel that opens in response to stretch forces in the membrane lipid bilayer. May participate in the regulation of osmotic pressure changes within the cell. The protein is Large-conductance mechanosensitive channel of Brucella anthropi (strain ATCC 49188 / DSM 6882 / CCUG 24695 / JCM 21032 / LMG 3331 / NBRC 15819 / NCTC 12168 / Alc 37) (Ochrobactrum anthropi).